We begin with the raw amino-acid sequence, 321 residues long: NADH-ubiquinone oxidoreductase chain 1 (321 aa).

The next 8 membrane-spanning stretches (helical) occupy residues L2–L22, A71–I91, L104–A124, L148–I168, H173–A193, L224–F244, I255–I275, and F295–G315.

It belongs to the complex I subunit 1 family.

It is found in the mitochondrion inner membrane. The catalysed reaction is a ubiquinone + NADH + 5 H(+)(in) = a ubiquinol + NAD(+) + 4 H(+)(out). Functionally, core subunit of the mitochondrial membrane respiratory chain NADH dehydrogenase (Complex I) that is believed to belong to the minimal assembly required for catalysis. Complex I functions in the transfer of electrons from NADH to the respiratory chain. The immediate electron acceptor for the enzyme is believed to be ubiquinone. In Lampetra fluviatilis (European river lamprey), this protein is NADH-ubiquinone oxidoreductase chain 1 (MT-ND1).